An 82-amino-acid polypeptide reads, in one-letter code: ATP synthase subunit c (82 aa).

A run of 2 helical transmembrane segments spans residues 7 to 27 (LVALACGLIVGLGAIGASIGI) and 53 to 73 (FILAGLIDAAFLIGVAIALLF).

It belongs to the ATPase C chain family. F-type ATPases have 2 components, F(1) - the catalytic core - and F(0) - the membrane proton channel. F(1) has five subunits: alpha(3), beta(3), gamma(1), delta(1), epsilon(1). F(0) has three main subunits: a(1), b(2) and c(10-14). The alpha and beta chains form an alternating ring which encloses part of the gamma chain. F(1) is attached to F(0) by a central stalk formed by the gamma and epsilon chains, while a peripheral stalk is formed by the delta and b chains.

It localises to the cell inner membrane. F(1)F(0) ATP synthase produces ATP from ADP in the presence of a proton or sodium gradient. F-type ATPases consist of two structural domains, F(1) containing the extramembraneous catalytic core and F(0) containing the membrane proton channel, linked together by a central stalk and a peripheral stalk. During catalysis, ATP synthesis in the catalytic domain of F(1) is coupled via a rotary mechanism of the central stalk subunits to proton translocation. In terms of biological role, key component of the F(0) channel; it plays a direct role in translocation across the membrane. A homomeric c-ring of between 10-14 subunits forms the central stalk rotor element with the F(1) delta and epsilon subunits. This is ATP synthase subunit c from Acidovorax ebreus (strain TPSY) (Diaphorobacter sp. (strain TPSY)).